Consider the following 189-residue polypeptide: Protein GrpE (189 aa).

The segment covering M1 to S38 has biased composition (basic and acidic residues). The segment at M1–Q54 is disordered.

This sequence belongs to the GrpE family. Homodimer.

It is found in the cytoplasm. Its function is as follows. Participates actively in the response to hyperosmotic and heat shock by preventing the aggregation of stress-denatured proteins, in association with DnaK and GrpE. It is the nucleotide exchange factor for DnaK and may function as a thermosensor. Unfolded proteins bind initially to DnaJ; upon interaction with the DnaJ-bound protein, DnaK hydrolyzes its bound ATP, resulting in the formation of a stable complex. GrpE releases ADP from DnaK; ATP binding to DnaK triggers the release of the substrate protein, thus completing the reaction cycle. Several rounds of ATP-dependent interactions between DnaJ, DnaK and GrpE are required for fully efficient folding. This Tropheryma whipplei (strain TW08/27) (Whipple's bacillus) protein is Protein GrpE.